A 338-amino-acid chain; its full sequence is MQVYYDKDADLSIIQGMKVAIVGYGSQGHAHANNLKDSGVDVTVALRAGSASAKKAEGAGLKVQGIEEAVKAADLIMILAPDEHQAALYKNQVEPNLKQGAVLAFAHGFNVHFEQIVPRSDVDVIMIAPKGPGHLVRSTYTKGGGVPSLIAVYQDASGRARDIALSYASANGGGRAGVIETSFKDETETDLFGEQAVLCGGATALVQAGFETLVEAGYPPEMAYFECLHELKLIVDLMYEGGIADMRYSISNTAEYGDITRGPRVVTEQTKAEMKKILTEIQTGKFAREFILENQAGAATLKASRRIAREHPIEVVGAKLRDMMPWIKANKIVDKSKN.

Residues 1–181 (MQVYYDKDAD…GGGRAGVIET (181 aa)) enclose the KARI N-terminal Rossmann domain. NADP(+)-binding positions include 24–27 (YGSQ), Arg-47, Ser-50, Ser-52, and 82–85 (DEHQ). His-107 is an active-site residue. Gly-133 lines the NADP(+) pocket. The 146-residue stretch at 182-327 (SFKDETETDL…AKLRDMMPWI (146 aa)) folds into the KARI C-terminal knotted domain. 4 residues coordinate Mg(2+): Asp-190, Glu-194, Glu-226, and Glu-230. Ser-251 lines the substrate pocket.

It belongs to the ketol-acid reductoisomerase family. Mg(2+) is required as a cofactor.

The catalysed reaction is (2R)-2,3-dihydroxy-3-methylbutanoate + NADP(+) = (2S)-2-acetolactate + NADPH + H(+). It catalyses the reaction (2R,3R)-2,3-dihydroxy-3-methylpentanoate + NADP(+) = (S)-2-ethyl-2-hydroxy-3-oxobutanoate + NADPH + H(+). The protein operates within amino-acid biosynthesis; L-isoleucine biosynthesis; L-isoleucine from 2-oxobutanoate: step 2/4. It participates in amino-acid biosynthesis; L-valine biosynthesis; L-valine from pyruvate: step 2/4. Involved in the biosynthesis of branched-chain amino acids (BCAA). Catalyzes an alkyl-migration followed by a ketol-acid reduction of (S)-2-acetolactate (S2AL) to yield (R)-2,3-dihydroxy-isovalerate. In the isomerase reaction, S2AL is rearranged via a Mg-dependent methyl migration to produce 3-hydroxy-3-methyl-2-ketobutyrate (HMKB). In the reductase reaction, this 2-ketoacid undergoes a metal-dependent reduction by NADPH to yield (R)-2,3-dihydroxy-isovalerate. This is Ketol-acid reductoisomerase (NADP(+)) from Thioalkalivibrio sulfidiphilus (strain HL-EbGR7).